We begin with the raw amino-acid sequence, 2224 residues long: Multifunctional protein r (2224 aa).

Residues 1-369 form a GATase (Glutamine amidotransferase) region; that stretch reads MASTDCYLAL…PQDTEFLFDV (369 aa). Residues S55, G240, and G242 each contribute to the L-glutamine site. Positions 195–380 constitute a Glutamine amidotransferase type-1 domain; it reads RIAILDCGLK…MESIQQKDLT (186 aa). The Nucleophile; for GATase activity role is filled by C269. L-glutamine contacts are provided by L270, Q273, N311, G313, and Y314. Residues H353 and E355 each act as for GATase activity in the active site. The linker stretch occupies residues 370–415; sequence FMESIQQKDLTIPQLIEQRLRPTTPAIDSAPVMPRKVLILGSGGLS. The tract at residues 416–1470 is CPSase (Carbamoyl-phosphate synthase); it reads IGQAGEFDYS…KPPMKTHTDC (1055 aa). Residues R525, R565, G571, G572, K602, E609, G635, I636, H637, Q678, and E692 each contribute to the ATP site. ATP-grasp domains are found at residues 529 to 721 and 1066 to 1257; these read AERV…KLAL and SRML…RAIV. Positions 678, 692, and 694 each coordinate Mg(2+). The Mn(2+) site is built by Q678, E692, and N694. Positions 1102, 1141, 1143, 1148, 1173, 1174, 1175, 1176, 1216, and 1228 each coordinate ATP. Q1216, E1228, and N1230 together coordinate Mg(2+). The Mn(2+) site is built by Q1216, E1228, and N1230. The region spanning 1322-1477 is the MGS-like domain; it reads FQIPKNAVLL…TDCMTSRRIV (156 aa). A linker region spans residues 1471 to 1484; sequence MTSRRIVKLPGFID. Residues 1485 to 1800 are DHOase (dihydroorotase); that stretch reads VHVHLREPGA…GTKVKGRVHR (316 aa). The Zn(2+) site is built by H1486 and H1488. Residues R1490 and N1520 each coordinate (S)-dihydroorotate. Residues K1571, H1605, C1628, H1629, and E1652 each contribute to the Zn(2+) site. K1571 carries the post-translational modification N6-carboxylysine. R1676 lines the (S)-dihydroorotate pocket. Residue D1701 participates in Zn(2+) binding. D1701 (for DHOase activity) is an active-site residue. Positions 1705 and 1717 each coordinate (S)-dihydroorotate. The segment at 1801-1912 is linker; the sequence is VVLRGEVAFV…QRTTNSNPVA (112 aa). The disordered stretch occupies residues 1821 to 1843; that stretch reads GQNVRPKQSPLASEASQDLLPSD. Residues S1883, S1885, S1892, and S1894 each carry the phosphoserine modification. The segment at 1913-2224 is ATCase (Aspartate transcarbamylase); that stretch reads HSLMGKHILA…MVVGGRNTAL (312 aa). Residues R1970 and T1971 each coordinate carbamoyl phosphate. K1998 contacts L-aspartate. 3 residues coordinate carbamoyl phosphate: R2019, H2047, and Q2050. L-aspartate is bound by residues R2080 and R2141. L2180 and P2181 together coordinate carbamoyl phosphate.

In the N-terminal section; belongs to the CarA family. This sequence in the 2nd section; belongs to the CarB family. It in the 3rd section; belongs to the metallo-dependent hydrolases superfamily. DHOase family. CAD subfamily. The protein in the C-terminal section; belongs to the aspartate/ornithine carbamoyltransferase superfamily. ATCase family. Requires Mg(2+) as cofactor. Mn(2+) serves as cofactor. The cofactor is Zn(2+).

It is found in the cytoplasm. The catalysed reaction is hydrogencarbonate + L-glutamine + 2 ATP + H2O = carbamoyl phosphate + L-glutamate + 2 ADP + phosphate + 2 H(+). It carries out the reaction L-glutamine + H2O = L-glutamate + NH4(+). The enzyme catalyses hydrogencarbonate + NH4(+) + 2 ATP = carbamoyl phosphate + 2 ADP + phosphate + 2 H(+). It catalyses the reaction carbamoyl phosphate + L-aspartate = N-carbamoyl-L-aspartate + phosphate + H(+). The catalysed reaction is (S)-dihydroorotate + H2O = N-carbamoyl-L-aspartate + H(+). It participates in pyrimidine metabolism; UMP biosynthesis via de novo pathway; (S)-dihydroorotate from bicarbonate: step 1/3. The protein operates within pyrimidine metabolism; UMP biosynthesis via de novo pathway; (S)-dihydroorotate from bicarbonate: step 2/3. It functions in the pathway pyrimidine metabolism; UMP biosynthesis via de novo pathway; (S)-dihydroorotate from bicarbonate: step 3/3. In terms of biological role, multifunctional protein that encodes the first 3 enzymatic activities of the de novo pyrimidine pathway: carbamoylphosphate synthetase (CPSase; EC 6.3.5.5), aspartate transcarbamylase (ATCase; EC 2.1.3.2) and dihydroorotase (DHOase; EC 3.5.2.3). The CPSase-function is accomplished in 2 steps, by a glutamine-dependent amidotransferase activity (GATase) that binds and cleaves glutamine to produce ammonia, followed by an ammonium-dependent carbamoyl phosphate synthetase, which reacts with the ammonia, hydrogencarbonate and ATP to form carbamoyl phosphate. The endogenously produced carbamoyl phosphate is sequestered and channeled to the ATCase active site. ATCase then catalyzes the formation of carbamoyl-L-aspartate from L-aspartate and carbamoyl phosphate. In the last step, DHOase catalyzes the cyclization of carbamoyl aspartate to dihydroorotate. The polypeptide is Multifunctional protein r (r) (Drosophila melanogaster (Fruit fly)).